The chain runs to 201 residues: 3-isopropylmalate dehydratase small subunit (201 aa).

It belongs to the LeuD family. LeuD type 1 subfamily. Heterodimer of LeuC and LeuD.

The enzyme catalyses (2R,3S)-3-isopropylmalate = (2S)-2-isopropylmalate. It functions in the pathway amino-acid biosynthesis; L-leucine biosynthesis; L-leucine from 3-methyl-2-oxobutanoate: step 2/4. Functionally, catalyzes the isomerization between 2-isopropylmalate and 3-isopropylmalate, via the formation of 2-isopropylmaleate. In Klebsiella pneumoniae (strain 342), this protein is 3-isopropylmalate dehydratase small subunit.